We begin with the raw amino-acid sequence, 402 residues long: Nicotinate phosphoribosyltransferase (402 aa).

His224 is modified (phosphohistidine; by autocatalysis).

This sequence belongs to the NAPRTase family. Post-translationally, transiently phosphorylated on a His residue during the reaction cycle. Phosphorylation strongly increases the affinity for substrates and increases the rate of nicotinate D-ribonucleotide production. Dephosphorylation regenerates the low-affinity form of the enzyme, leading to product release.

It carries out the reaction nicotinate + 5-phospho-alpha-D-ribose 1-diphosphate + ATP + H2O = nicotinate beta-D-ribonucleotide + ADP + phosphate + diphosphate. It participates in cofactor biosynthesis; NAD(+) biosynthesis; nicotinate D-ribonucleotide from nicotinate: step 1/1. In terms of biological role, catalyzes the synthesis of beta-nicotinate D-ribonucleotide from nicotinate and 5-phospho-D-ribose 1-phosphate at the expense of ATP. The chain is Nicotinate phosphoribosyltransferase from Neisseria meningitidis serogroup B (strain ATCC BAA-335 / MC58).